The primary structure comprises 490 residues: UDP-N-acetylmuramate--L-alanine ligase (490 aa).

Residue 130–136 coordinates ATP; sequence GTHGKTT.

This sequence belongs to the MurCDEF family.

It localises to the cytoplasm. The catalysed reaction is UDP-N-acetyl-alpha-D-muramate + L-alanine + ATP = UDP-N-acetyl-alpha-D-muramoyl-L-alanine + ADP + phosphate + H(+). It participates in cell wall biogenesis; peptidoglycan biosynthesis. Cell wall formation. This chain is UDP-N-acetylmuramate--L-alanine ligase, found in Idiomarina loihiensis (strain ATCC BAA-735 / DSM 15497 / L2-TR).